The chain runs to 174 residues: Probable nicotinate-nucleotide adenylyltransferase (174 aa).

The protein belongs to the NadD family.

It carries out the reaction nicotinate beta-D-ribonucleotide + ATP + H(+) = deamido-NAD(+) + diphosphate. It functions in the pathway cofactor biosynthesis; NAD(+) biosynthesis; deamido-NAD(+) from nicotinate D-ribonucleotide: step 1/1. Catalyzes the reversible adenylation of nicotinate mononucleotide (NaMN) to nicotinic acid adenine dinucleotide (NaAD). The polypeptide is Probable nicotinate-nucleotide adenylyltransferase (Helicobacter pylori (strain HPAG1)).